Consider the following 358-residue polypeptide: Hydroxyproline O-arabinosyltransferase 3 (358 aa).

A helical; Signal-anchor membrane pass occupies residues 8 to 28 (LLFLLGFGFFVVTYNLLTLIV).

As to expression, ubiquitous.

It localises to the golgi apparatus. The protein resides in the cis-Golgi network membrane. The catalysed reaction is trans-4-hydroxy-L-prolyl-[protein] + UDP-beta-L-arabinofuranose = O-(beta-L-arabinofuranosyl)-trans-4-hydroxy-L-prolyl-[protein] + UDP + H(+). Functionally, glycosyltransferase involved in the O-arabinosylation of several proteins including extensins and small signaling peptides. Catalyzes the transfer of the initial L-arabinose to the hydroxyl group of Hyp residues. Contributes redundantly with HPAT1 and HPAT2 to arabinosylation of EXT3, but main contributor to arabinosylation of CLE peptides. This is Hydroxyproline O-arabinosyltransferase 3 from Arabidopsis thaliana (Mouse-ear cress).